Consider the following 500-residue polypeptide: Cytochrome P450 2D14 (500 aa).

Cys-446 contacts heme.

Belongs to the cytochrome P450 family. Heme serves as cofactor.

The protein resides in the endoplasmic reticulum membrane. It is found in the microsome membrane. The enzyme catalyses an organic molecule + reduced [NADPH--hemoprotein reductase] + O2 = an alcohol + oxidized [NADPH--hemoprotein reductase] + H2O + H(+). Functionally, cytochromes P450 are a group of heme-thiolate monooxygenases. In liver microsomes, this enzyme is involved in an NADPH-dependent electron transport pathway. It oxidizes a variety of structurally unrelated compounds, including steroids, fatty acids, and xenobiotics. This Bos taurus (Bovine) protein is Cytochrome P450 2D14 (CYP2D14).